Here is a 611-residue protein sequence, read N- to C-terminus: Pleckstrin homology domain-containing family N member 1 (611 aa).

The disordered stretch occupies residues 1-45 (MGNSHCVPQAPRRLRASFSRKPSLKGNREDSARMSAGLPGPEAAR). Gly2 carries N-myristoyl glycine lipidation. Residues 61-100 (TDILDLENQRENLEQPFLSVFKKGRRRVPVRNLGKVVHYA) form an interaction with C1QBP region. PH domains follow at residues 96 to 192 (VVHY…TALL) and 222 to 319 (AVCA…THRE). Tyr302 bears the Phosphotyrosine mark. Disordered stretches follow at residues 323 to 424 (PLPG…PVTP), 438 to 468 (ESSPDAPDHTSETSHSPLYADPYTPPATSHR), and 483 to 611 (MQSA…VQWI). Residues 341 to 350 (GSLSSGGQTS) show a composition bias toward low complexity. Polar residues predominate over residues 360-391 (STRTSHSLPESSVPSTVGCSSQHTPDQANSDR). Tyr456 is modified (phosphotyrosine). Low complexity predominate over residues 498–509 (VPVSVPASDPRS). A Phosphoserine modification is found at Ser559. Residues 570–585 (RSPRRSRDPGYDHLWD) show a composition bias toward basic and acidic residues.

In terms of assembly, found in a complex with cytochrome c mRNA and various ribosomal proteins. Interacts with C1QBP. Interacts with ELAVL1. Interacts with BID. Phosphorylation is essential for its mitochondrial localization and regulates its interaction with C1QBP. Ubiquitous. Epressed in several cancer cell lines of differing origin.

It is found in the cell membrane. The protein resides in the mitochondrion. It localises to the mitochondrion membrane. Its function is as follows. Controls the stability of the leptin mRNA harboring an AU-rich element (ARE) in its 3' UTR, in cooperation with the RNA stabilizer ELAVL1. Decreases the stability of the leptin mRNA by antagonizing the function of ELAVL1 by inducing its atypical recruitment from the nucleus to the cytosol. Binds to cardiolipin (CL), phosphatidic acid (PA), phosphatidylinositol 4-phosphate (PtdIns(4)P) and phosphatidylserine (PS). Promotes apoptosis by enhancing BAX-BAK hetero-oligomerization via interaction with BID in colon cancer cells. In Homo sapiens (Human), this protein is Pleckstrin homology domain-containing family N member 1 (PLEKHN1).